Reading from the N-terminus, the 260-residue chain is LOB domain-containing protein 6 (260 aa).

An LOB domain is found at 32 to 133 (SPCAACKFLR…QDLARAKYEL (102 aa)).

It belongs to the LOB domain-containing protein family. In terms of assembly, interacts with RS2. As to expression, expressed in leaves, leaf primordia, immature ears, immature tassels, whole ovules, silk and husk leaves. Found on the adaxial side of organs.

It localises to the nucleus. Its function is as follows. Promotes the switch from proliferation to differentiation in the embryo sac. Negative regulator of cell proliferation in the adaxial side of leaves. Regulates the formation of a symmetric lamina and the establishment of venation. Interacts directly with RS2 (rough sheath 2) to repress some knox homeobox genes. This chain is LOB domain-containing protein 6 (LBD6), found in Zea mays (Maize).